Consider the following 576-residue polypeptide: Apolipoprotein N-acyltransferase 1 (576 aa).

The next 7 helical transmembrane spans lie at 15–35 (LILC…FSFF), 38–58 (GVFA…TSIW), 60–80 (AFLW…YWIP), 92–112 (FVSI…FFLF), 128–148 (YILL…FQIF), 168–188 (ICGV…FLIL), and 204–224 (IASL…IGYI). Positions 236–538 (LSVLMIQPDT…TGTRAFSIRL (303 aa)) constitute a CN hydrolase domain. E285 acts as the Proton acceptor in catalysis. The active site involves K355. Residue C446 is the Nucleophile of the active site. The chain crosses the membrane as a helical span at residues 549–569 (FGNSFLWIFCILILISRLIFV).

The protein belongs to the CN hydrolase family. Apolipoprotein N-acyltransferase subfamily.

It is found in the cell inner membrane. The catalysed reaction is N-terminal S-1,2-diacyl-sn-glyceryl-L-cysteinyl-[lipoprotein] + a glycerophospholipid = N-acyl-S-1,2-diacyl-sn-glyceryl-L-cysteinyl-[lipoprotein] + a 2-acyl-sn-glycero-3-phospholipid + H(+). It participates in protein modification; lipoprotein biosynthesis (N-acyl transfer). Catalyzes the phospholipid dependent N-acylation of the N-terminal cysteine of apolipoprotein, the last step in lipoprotein maturation. The sequence is that of Apolipoprotein N-acyltransferase 1 from Leptospira interrogans serogroup Icterohaemorrhagiae serovar copenhageni (strain Fiocruz L1-130).